The chain runs to 296 residues: Bifunctional protein FolD (296 aa).

NADP(+)-binding positions include 166-168 (GRS), Ser-195, and Thr-236.

This sequence belongs to the tetrahydrofolate dehydrogenase/cyclohydrolase family. In terms of assembly, homodimer.

It catalyses the reaction (6R)-5,10-methylene-5,6,7,8-tetrahydrofolate + NADP(+) = (6R)-5,10-methenyltetrahydrofolate + NADPH. It carries out the reaction (6R)-5,10-methenyltetrahydrofolate + H2O = (6R)-10-formyltetrahydrofolate + H(+). The protein operates within one-carbon metabolism; tetrahydrofolate interconversion. In terms of biological role, catalyzes the oxidation of 5,10-methylenetetrahydrofolate to 5,10-methenyltetrahydrofolate and then the hydrolysis of 5,10-methenyltetrahydrofolate to 10-formyltetrahydrofolate. The chain is Bifunctional protein FolD from Dehalococcoides mccartyi (strain ATCC BAA-2100 / JCM 16839 / KCTC 5957 / BAV1).